Reading from the N-terminus, the 335-residue chain is UPF0353 protein MLBr01808 (335 aa).

A run of 2 helical transmembrane segments spans residues Trp-18–Val-38 and Val-67–Thr-87. Residues Val-98–Leu-294 enclose the VWFA domain. The chain crosses the membrane as a helical span at residues Ala-309 to Ile-329.

This sequence belongs to the UPF0353 family.

The protein localises to the cell membrane. This chain is UPF0353 protein MLBr01808, found in Mycobacterium leprae (strain Br4923).